Here is a 74-residue protein sequence, read N- to C-terminus: MNATIFALLLLLNLAMYNAAEQSSETDMDDTLLIPEINRGRCIEEGKWCPKKAPCCGRLECKGPSPKQKKCTRP.

The signal sequence occupies residues 1 to 19 (MNATIFALLLLLNLAMYNA). Positions 20-39 (AEQSSETDMDDTLLIPEINR) are excised as a propeptide. Cystine bridges form between Cys42–Cys56, Cys49–Cys61, and Cys55–Cys71.

This sequence belongs to the neurotoxin 36 family. 01 subfamily. Expressed by the venom gland.

It is found in the secreted. In terms of biological role, probable ion channel inhibitor. The protein is U4-theraphotoxin-Cg1a of Chilobrachys guangxiensis (Chinese earth tiger tarantula).